A 179-amino-acid chain; its full sequence is Large ribosomal subunit protein uL6 (179 aa).

This sequence belongs to the universal ribosomal protein uL6 family. As to quaternary structure, part of the 50S ribosomal subunit.

Its function is as follows. This protein binds to the 23S rRNA, and is important in its secondary structure. It is located near the subunit interface in the base of the L7/L12 stalk, and near the tRNA binding site of the peptidyltransferase center. This is Large ribosomal subunit protein uL6 from Acaryochloris marina (strain MBIC 11017).